We begin with the raw amino-acid sequence, 592 residues long: Outer spore wall assembly protein SHE10 (592 aa).

The first 23 residues, 1-23 (MRFFKRFLLTLTVFIYTLRYLHC), serve as a signal peptide directing secretion. 2 coiled-coil regions span residues 354–385 (ENNI…LYEE) and 448–583 (LNQF…KQMG). The segment covering 507-580 (QSEQEERIKS…EVRKQEEARK (74 aa)) has biased composition (basic and acidic residues). Residues 507–592 (QSEQEERIKS…GSPPPPQQQQ (86 aa)) form a disordered region.

Belongs to the SHE10 family. Component of the mitochondria-localized RNase mitochondrial RNA-processing (RNase MRP) composed of one single RNA encoded by the NME1 gene and at least 31 proteins. Absent in the nucleus-localized RNase MRP (NuMRP).

The protein resides in the mitochondrion. Functionally, involved in spore wall assembly. May be a component of the mitochondrial RNase MRP (MtMRP), a ribonucleoprotein endoribonuclease involved in the cleaving RNA transcripts to generate primers for DNA replication in mitochondria. The chain is Outer spore wall assembly protein SHE10 from Vanderwaltozyma polyspora (strain ATCC 22028 / DSM 70294 / BCRC 21397 / CBS 2163 / NBRC 10782 / NRRL Y-8283 / UCD 57-17) (Kluyveromyces polysporus).